Here is an 888-residue protein sequence, read N- to C-terminus: Villin-like protein quail (888 aa).

A Gelsolin-like repeat occupies 307-366; it reads GVYLLDNYGQSIWLWVGGQAPQADALSAMGNGRAFVKKKKYPDNTLVVRVLEGHEPVEFK. One can recognise an HP domain in the interval 823 to 888; it reads FDGHKKYPLT…MELKKQFKLF (66 aa).

It belongs to the villin/gelsolin family. Germline specific in adult flies.

Its function is as follows. Required for the formation of cytoplasmic actin filament bundles in nurse cells, possibly by regulating both the polymerization and organization of actin filaments. Mutations in quail result in female sterility due to the disruption of cytoplasmic transport from the nurse cells into the oocyte late in oogenesis. This chain is Villin-like protein quail (qua), found in Drosophila melanogaster (Fruit fly).